Consider the following 1248-residue polypeptide: MGHLELLLVENFKSWRGRQVIGPFKRFTCIIGPNGSGKSNVMDALSFVMGEKTTNLRVKNIQELIHGAHTGKPVSSSASVTIIYIEDSGEEKTFTRIIRGGCSEYHFGDKPVSRSVYVAQLENIGIIVKAQNCLVFQGTVESISMKKPKERTQFFEEISTSGEFIGEYEAKKKKLQKAEEDAQFHFNVKKNVAAERKHAKIEKEEAEHYQNLLEELKINKIQLMLFQLYYNEEKINVLNTELEQMDGNLSVVKDTLSHHENIFKAKKKDYGMLTRQLQQTAKELKSVEAILNQKRPQYIKAKENTSHHLKKLDLSKKLITDNEKQCSKQEDGIRALVAELADLDRAWKSFEKQMEEKILQKGRDIELENSQLDRYKLLKEQVRRKVGIMTQQLEKLQWEQKAEKERLAFEKRRHGDTQGNLKQIKEQIEEHKKRIEKLEEYTKTCMDCLEDKKQQEEALKKEIENTKSRMSEVNEELSLIRNELQNAGIDNHEGKRQQKRAEVLEHLKRLYPDSVFGRLLDLCHPIHKKYQLAVTKLFGRYMVAIVVASEKIAKDCIRFLKAERAEPETFLALDYLDIKPINERLREIKGCKMMIDVIKTQFPQLKKVIQFVCGNGLVCETVEEARHIAFGGPERRKAVALDGTLFLKSGVISGGSSDLKHKALCWDEKELHNLRDKRSQLVQELKELMKTLRKETDLKQIQTLVQGTNTRLKYSQNELEMIKKKHLATFYREQSQLQSELLNIDSQCTMLSEGINKQQQKIEEFQDKIDEVEDDIFQDFCEEIGVENIREFENKHVKQQQENDQKRLEFEKQKTRLNIQLEYSRNQLKKKLNNIDTLKTTIQKGKEDIDNLKKTEEECLKIVEELMVKQEQIKEVLATQSSNIEKIHIQIEEERKKVLAVDREVGKLQKEVVIIQGSLEQKLLEKHNLLLDCKVQDIDISLVLGSLEDIIEMELTETESTQATADIYEKEASIQIDYSPLREDLKALQSDKEVEAHLTLLLQQVASQENTLLKTTAPNLRAQENLKTVRDKFQESADVFEASRKEARICRQEFEQVKRRRYDAFSQCFEHISVSIDQIYKKLCRNNSAQAFLSPENPEEPYLDGISYNCVAPGKRFMPMDNLSGGEKCVAALALLFAVHSFRPAPFFVLDEVDAALDNTNIGKVSSYIKEQSQEQFQMIIISLKEEFYSKADALIGVYPEHNECMFSHVLTLDLSKYPDTEDQEGSRSHRKPRVPRVSMSPKSPQSR.

32-39 (GPNGSGKS) provides a ligand contact to ATP. Residues 163–502 (EFIGEYEAKK…EGKRQQKRAE (340 aa)) adopt a coiled-coil conformation. The 116-residue stretch at 514 to 629 (SVFGRLLDLC…ETVEEARHIA (116 aa)) folds into the SMC hinge domain. 3 positions are modified to N6-acetyllysine: lysine 648, lysine 713, and lysine 1032. The stretch at 666-912 (WDEKELHNLR…REVGKLQKEV (247 aa)) forms a coiled coil. Positions 1219-1228 (PDTEDQEGSR) are enriched in basic and acidic residues. Residues 1219 to 1248 (PDTEDQEGSRSHRKPRVPRVSMSPKSPQSR) form a disordered region.

Belongs to the SMC family. SMC1 subfamily. In terms of assembly, forms a heterodimer with SMC3. Component of a meiosis-specific cohesin complex, probably composed of the SMC1B and SMC3 heterodimer attached via their SMC hinge domain, RAD21 (or its meiosis-specific related protein REC8), which link them, and STAG3, which interacts with RAD21 or REC8. The cohesin complex interacts with the cohesin loading complex subunits NIPBL/Scc2 (via HEAT repeats) and MAU2/Scc4. NIPBL directly contacts all members of the complex, RAD21, SMC1A/B, SMC3 and STAG1. Spermatocytes (at protein level). Testis and ovary specific. Not expressed in somatic cells.

It localises to the nucleus. Its subcellular location is the chromosome. It is found in the centromere. Functionally, meiosis-specific component of cohesin complex. Required for the maintenance of meiotic cohesion, but not, or only to a minor extent, for its establishment. Contributes to axial element (AE) formation and the organization of chromatin loops along the AE. Plays a key role in synapsis, recombination and chromosome movements. The cohesin complex is required for the cohesion of sister chromatids after DNA replication. The cohesin complex apparently forms a large proteinaceous ring within which sister chromatids can be trapped. At anaphase, the complex is cleaved and dissociates from chromatin, allowing sister chromatids to segregate. The meiosis-specific cohesin complex probably replaces mitosis specific cohesin complex when it dissociates from chromatin during prophase I. The chain is Structural maintenance of chromosomes protein 1B (Smc1b) from Mus musculus (Mouse).